We begin with the raw amino-acid sequence, 974 residues long: Localization factor PodJL (974 aa).

Coiled coils occupy residues Asp-81–Gly-163, Val-218–Ala-320, and Gln-375–Ala-469. Disordered stretches follow at residues Ser-460 to Glu-497 and Ala-589 to Lys-611. The segment covering Ala-589–Glu-598 has biased composition (low complexity). The helical transmembrane segment at Ala-642–Leu-662 threads the bilayer. Sel1-like repeat units lie at residues Pro-757–Asp-793, Pro-794–Leu-829, and Val-830–Asp-865.

In terms of processing, two isoforms exist, the full-length translation product PodJL and a C-terminal truncated form PodJS. Both appear during a specific time period of the cell cycle to control different aspects of polar organelle development.

Its subcellular location is the membrane. In terms of biological role, podJL provides the positional information for the localization of several polar organelles (pili, adhesive holdfast and chemotactic apparatus) by recruiting structural (CpaE) and regulatory (PleC) proteins to a specific cell pole. The polypeptide is Localization factor PodJL (podJ) (Caulobacter vibrioides (strain ATCC 19089 / CIP 103742 / CB 15) (Caulobacter crescentus)).